We begin with the raw amino-acid sequence, 61 residues long: Small ribosomal subunit protein uS14B (61 aa).

Zn(2+) is bound by residues cysteine 24, cysteine 27, cysteine 40, and cysteine 43.

The protein belongs to the universal ribosomal protein uS14 family. Zinc-binding uS14 subfamily. In terms of assembly, part of the 30S ribosomal subunit. Contacts proteins S3 and S10. Zn(2+) is required as a cofactor.

Binds 16S rRNA, required for the assembly of 30S particles and may also be responsible for determining the conformation of the 16S rRNA at the A site. The chain is Small ribosomal subunit protein uS14B from Mycobacterium bovis (strain ATCC BAA-935 / AF2122/97).